The chain runs to 550 residues: Chaperonin GroEL (550 aa).

Residues 29-32, Lys50, 86-90, Gly417, and Asp499 contribute to the ATP site; these read TAGP and DGTTT.

Belongs to the chaperonin (HSP60) family. Forms a cylinder of 14 subunits composed of two heptameric rings stacked back-to-back. Interacts with the co-chaperonin GroES.

It localises to the cytoplasm. It carries out the reaction ATP + H2O + a folded polypeptide = ADP + phosphate + an unfolded polypeptide.. Its function is as follows. Together with its co-chaperonin GroES, plays an essential role in assisting protein folding. The GroEL-GroES system forms a nano-cage that allows encapsulation of the non-native substrate proteins and provides a physical environment optimized to promote and accelerate protein folding. The sequence is that of Chaperonin GroEL from Ehrlichia chaffeensis.